Consider the following 423-residue polypeptide: Protein CLP1 homolog (423 aa).

Residues glutamate 16, lysine 57, and 119 to 124 (DVGKST) each bind ATP.

Belongs to the Clp1 family. Clp1 subfamily.

It localises to the nucleus. Functionally, required for endonucleolytic cleavage during polyadenylation-dependent pre-mRNA 3'-end formation. In Drosophila simulans (Fruit fly), this protein is Protein CLP1 homolog (cbc).